Reading from the N-terminus, the 393-residue chain is Bifunctional enzyme Fae/Hps (393 aa).

The interval 1-161 (MYLIGEALIG…HEKDRAAHAV (161 aa)) is formaldehyde-activating enzyme. Residue His17 is the Proton donor of the active site. Asp19, Leu48, Lys66, Thr68, and Gln83 together coordinate substrate. The interval 162–393 (MGFKVPRLWD…IDQFRIMTDF (232 aa)) is 3-hexulose-6-phosphate synthase.

In the N-terminal section; belongs to the formaldehyde-activating enzyme family. It in the C-terminal section; belongs to the HPS/KGPDC family. HPS subfamily.

The catalysed reaction is 5,6,7,8-tetrahydromethanopterin + formaldehyde = 5,10-methylenetetrahydromethanopterin + H2O. The enzyme catalyses D-ribulose 5-phosphate + formaldehyde = D-arabino-hex-3-ulose 6-phosphate. It participates in carbohydrate biosynthesis; D-ribose 5-phosphate biosynthesis. Functionally, catalyzes the condensation of formaldehyde with tetrahydromethanopterin (H(4)MPT) to 5,10-methylenetetrahydromethanopterin. Catalyzes the reversible formation of ribulose-5-phosphate and formaldehyde from 3-hexulose-6-phosphate. The chain is Bifunctional enzyme Fae/Hps from Methanospirillum hungatei JF-1 (strain ATCC 27890 / DSM 864 / NBRC 100397 / JF-1).